The following is an 89-amino-acid chain: DNA/RNA-binding protein Alba 2 (89 aa).

K12 bears the N6-acetyllysine mark.

It belongs to the histone-like Alba family. Post-translationally, acetylated. Acetylation at Lys-12 decreases DNA-binding affinity.

Its subcellular location is the cytoplasm. The protein localises to the chromosome. Functionally, binds double-stranded DNA tightly but without sequence specificity. Involved in DNA compaction. In Saccharolobus shibatae (strain ATCC 51178 / DSM 5389 / JCM 8931 / NBRC 15437 / B12) (Sulfolobus shibatae), this protein is DNA/RNA-binding protein Alba 2.